The sequence spans 322 residues: Probable heme-iron transport system permease protein IsdF (322 aa).

The next 9 helical transmembrane spans lie at 9 to 29 (LLFL…FVTG), 61 to 81 (ILIA…LQAA), 89 to 109 (ANII…MLFI), 114 to 134 (FYLP…IILL), 143 to 163 (VSMI…LEIL), 179 to 199 (IWSD…LTLL), 233 to 253 (VFLA…GIIV), 267 to 287 (VLIP…DLLG), and 294 to 314 (LEIP…IYLI).

It belongs to the binding-protein-dependent transport system permease family. FecCD subfamily.

The protein localises to the cell membrane. Functionally, part of the binding-protein-dependent transport system for heme-iron. Responsible for the translocation of the substrate across the membrane. The sequence is that of Probable heme-iron transport system permease protein IsdF (isdF) from Staphylococcus aureus (strain MSSA476).